The chain runs to 344 residues: Phenylalanine--tRNA ligase alpha subunit (344 aa).

A Mg(2+)-binding site is contributed by Glu-255.

Belongs to the class-II aminoacyl-tRNA synthetase family. Phe-tRNA synthetase alpha subunit type 1 subfamily. Tetramer of two alpha and two beta subunits. Mg(2+) serves as cofactor.

It localises to the cytoplasm. The catalysed reaction is tRNA(Phe) + L-phenylalanine + ATP = L-phenylalanyl-tRNA(Phe) + AMP + diphosphate + H(+). This chain is Phenylalanine--tRNA ligase alpha subunit, found in Phocaeicola vulgatus (strain ATCC 8482 / DSM 1447 / JCM 5826 / CCUG 4940 / NBRC 14291 / NCTC 11154) (Bacteroides vulgatus).